A 73-amino-acid chain; its full sequence is Carboxysome shell vertex protein CsoS4B (73 aa).

Positions 1 to 68 constitute a BMV domain; it reads MVCTQRVAGL…TDLTIGGIID (68 aa).

This sequence belongs to the CcmL/EutN family. CsoS4 subfamily. Homopentamer.

It localises to the carboxysome. Probably forms vertices in the carboxysome, a polyhedral inclusion where RuBisCO (ribulose bisphosphate carboxylase, cbbL-cbbS) is sequestered. Has been modeled to induce curvature upon insertion into an otherwise flat hexagonal layer of major carboxysome subunits. Has not been identified in purified carboxysomes; it is expected to be present in very low amounts. This is Carboxysome shell vertex protein CsoS4B from Prochlorococcus marinus subsp. pastoris (strain CCMP1986 / NIES-2087 / MED4).